The following is a 424-amino-acid chain: Probable serine/threonine-protein kinase PBL6 (424 aa).

The disordered stretch occupies residues 1–26 (MGCFGRTPKSNKRSDTKTTKNNDFTP). G2 is lipidated: N-myristoyl glycine. C3 carries the S-palmitoyl cysteine lipid modification. T87 bears the Phosphothreonine mark. Positions 98–377 (FKSDCFLGEG…VVMALDHLAS (280 aa)) constitute a Protein kinase domain. Residues 104-112 (LGEGGFGKV) and K127 contribute to the ATP site. Y172 carries the phosphotyrosine modification. Residue D225 is the Proton acceptor of the active site. 2 positions are modified to phosphoserine: S229 and S259. Residues T260 and T265 each carry the phosphothreonine modification. Y273 carries the phosphotyrosine modification.

This sequence belongs to the protein kinase superfamily. Ser/Thr protein kinase family.

It is found in the cell membrane. It carries out the reaction L-seryl-[protein] + ATP = O-phospho-L-seryl-[protein] + ADP + H(+). The catalysed reaction is L-threonyl-[protein] + ATP = O-phospho-L-threonyl-[protein] + ADP + H(+). Its function is as follows. May be involved in plant defense signaling. The polypeptide is Probable serine/threonine-protein kinase PBL6 (Arabidopsis thaliana (Mouse-ear cress)).